An 815-amino-acid chain; its full sequence is Protein SEY1 homolog (815 aa).

At 1–737 (MRQIIDYDCN…IQSTGRQPQN (737 aa)) the chain is on the cytoplasmic side. A GB1/RHD3-type G domain is found at 28 to 260 (TLGFNVISIL…LPKDYTRRIP (233 aa)). 38-45 (GCQSTGKS) contacts GTP. A coiled-coil region spans residues 298 to 321 (AKDDILDGYKKSIKDLQKKMEKRE). A helical membrane pass occupies residues 738–758 (IPWWIYLLIIILGFDEITYVL). The Lumenal portion of the chain corresponds to 759–761 (TSP). Residues 762–782 (VLVTLLLLLASFIYSYLTGNF) traverse the membrane as a helical segment. Over 783–815 (SSFCNYSQQFVIISTKILHYISGAIHSSLDNRK) the chain is Cytoplasmic.

This sequence belongs to the TRAFAC class dynamin-like GTPase superfamily. GB1/RHD3 GTPase family. RHD3 subfamily.

The protein localises to the endoplasmic reticulum membrane. Functionally, probable GTP-binding protein that may be involved in cell development. This is Protein SEY1 homolog from Cryptosporidium hominis.